Here is a 257-residue protein sequence, read N- to C-terminus: Early E1A protein (257 aa).

2 disordered regions span residues 26 to 46 (NATM…PSLH) and 75 to 103 (LAAE…EKEI). The segment at 43–51 (PSLHDLYDL) is interaction with RB1 in competition with E2F1. Residues 75–91 (LAAEEASSPSSDSDSSL) are compositionally biased toward low complexity. An interaction with UBE2I region spans residues 79-144 (EASSPSSDSD…ASHGVQAVSE (66 aa)). Residues 94–103 (PRHDRGEKEI) are compositionally biased toward basic and acidic residues. Residues 104 to 108 (PGLKW) carry the PXLXP motif, interaction with host ZMYND11 motif. An LXCXE motif, interaction with host RB1 and TMEM173/STING motif is present at residues 113–117 (LRCYE). Residues 158–178 (CKSCEFHRINTGDKAVLCALC) fold into a zinc finger. Residues 191-221 (VSDADDETPTTESTLSPPEIGTSPSDNIVRP) form a disordered region. Residues 200-209 (TTESTLSPPE) show a composition bias toward low complexity. The short motif at 246–250 (PLDLC) is the PXDLS motif, CTBP-binding element. Residues 252–257 (RKRPRH) carry the Nuclear localization signal motif.

Belongs to the adenoviridae E1A protein family. Interacts with host UBE2I; this interaction interferes with polySUMOylation. Interacts with host RB1; this interaction induces the aberrant dissociation of RB1-E2F1 complex thereby disrupting the activity of RB1 and activating E2F1-regulated genes. Interacts with host ATF7; the interaction enhances ATF7-mediated viral transactivation activity which requires the zinc binding domains of both proteins. Isoform early E1A 32 kDa protein and isoform early E1A 26 kDa protein interact (via N-terminus) with CUL1 and E3 ubiquitin ligase RBX1; these interactions inhibit RBX1-CUL1-dependent elongation reaction of ubiquitin chains and attenuate ubiquitination of SCF(FBXW7) target proteins. Interacts (via PXLXP motif) with host ZMYND11/BS69 (via MYND-type zinc finger); this interaction inhibits E1A mediated transactivation. Interacts with host EP300; this interaction stimulates the acetylation of RB1 by recruiting EP300 and RB1 into a multimeric-protein complex. Interacts with host CTBP1 and CTBP2; this interaction seems to potentiate viral replication. Interacts with host DCAF7. Interacts with host DYRK1A. Interacts with host KPNA4; this interaction allows E1A import into the host nucleus. Interacts with host EP400; this interaction stabilizes MYC. Interacts with host TBP protein; this interaction probably disrupts the TBP-TATA complex. Interacts (via LXCXE motif) with host TMEM173/STING; this interaction impairs the ability of TMEM173/STING to sense cytosolic DNA and promote the production of type I interferon (IFN-alpha and IFN-beta). Interacts (via C-terminus) with host ZBED1/hDREF (via C-terminus); the interaction is direct.

Its subcellular location is the host nucleus. Functionally, plays a role in viral genome replication by driving entry of quiescent cells into the cell cycle. Stimulation of progression from G1 to S phase allows the virus to efficiently use the cellular DNA replicating machinery to achieve viral genome replication. E1A protein has both transforming and trans-activating activities. Induces the disassembly of the E2F1 transcription factor from RB1 by direct competition for the same binding site on RB1, with subsequent transcriptional activation of E2F1-regulated S-phase genes and of the E2 region of the adenoviral genome. Release of E2F1 leads to the ARF-mediated inhibition of MDM2 and causes TP53/p53 to accumulate because it is not targeted for degradation by MDM2-mediated ubiquitination anymore. This increase in TP53, in turn, would arrest the cell proliferation and direct its death but this effect is counteracted by the viral protein E1B-55K. Inactivation of the ability of RB1 to arrest the cell cycle is critical for cellular transformation, uncontrolled cellular growth and proliferation induced by viral infection. Interaction with RBX1 and CUL1 inhibits ubiquitination of the proteins targeted by SCF(FBXW7) ubiquitin ligase complex, and may be linked to unregulated host cell proliferation. The tumorigenesis-restraining activity of E1A may be related to the disruption of the host CtBP-CtIP complex through the CtBP binding motif. Interaction with host TMEM173/STING impairs the ability of TMEM173/STING to sense cytosolic DNA and promote the production of type I interferon (IFN-alpha and IFN-beta). Promotes the sumoylation of host ZBED1/hDREF with SUMO1. The protein is Early E1A protein of Human adenovirus E serotype 4 (HAdV-4).